The primary structure comprises 77 residues: uncharacterized protein (77 aa).

This is an uncharacterized protein from Acidianus hospitalis (AFV-1).